Reading from the N-terminus, the 707-residue chain is Serine/threonine protein kinase UL97 (707 aa).

The segment covering 1 to 14 (MSSALRSRARSASL) has biased composition (low complexity). Disordered stretches follow at residues 1-32 (MSSALRSRARSASLGTTTEGWDPPPLRRPSRA), 115-146 (EKEDAASDKENLRRPVVPSTSSRGSAASGDGY), 176-199 (FTGGSDPSDSVSGVRGGRKRPLRP), and 231-264 (ESQDSAVASGPGRVPQPLSGSSGEESATAVEADS). Over residues 115 to 127 (EKEDAASDKENLR) the composition is skewed to basic and acidic residues. Positions 178–188 (GGSDPSDSVSG) are enriched in low complexity. ATP is bound by residues 337–345 (LGQGSFGEV) and Lys-359. Asp-456 (proton acceptor) is an active-site residue.

The protein belongs to the protein kinase superfamily. Tyr protein kinase family. HCMV ganciclovir subfamily. Interacts with UL83. Autophosphorylates on serine and threonine residues.

Its subcellular location is the virion. It carries out the reaction L-seryl-[protein] + ATP = O-phospho-L-seryl-[protein] + ADP + H(+). The enzyme catalyses L-threonyl-[protein] + ATP = O-phospho-L-threonyl-[protein] + ADP + H(+). In terms of biological role, serine/threonine protein kinase that plays important roles in several processes including nuclear viral egress, viral replication or regulation of host cell cycle progression. Participates in the acquisition of tegument during virion morphogenesis in the nucleus. Redistributes the host nuclear lamina by phosphorylating cellular Lamins-A/C. Plays a role in viral DNA synthesis by phosphorylating the DNA polymerase processivity factor UL44. Stimulates host cell cycle to support viral DNA synthesis by phosphorylating host retinoblastoma/RB1 protein. Additional substrates have been identified including host EF1D or H2B. Also phosphorylates host SAMHD1 and thereby counteracts its antiviral effect by reducing its dNTP hydrolase activity. The chain is Serine/threonine protein kinase UL97 (UL97) from Human cytomegalovirus (strain Towne) (HHV-5).